The following is a 325-amino-acid chain: Probable serine/threonine-protein phosphatase 2A activator 1 (325 aa).

This sequence belongs to the PTPA-type PPIase family.

The protein resides in the cytoplasm. It catalyses the reaction [protein]-peptidylproline (omega=180) = [protein]-peptidylproline (omega=0). Its function is as follows. PPIases accelerate the folding of proteins. It catalyzes the cis-trans isomerization of proline imidic peptide bonds in oligopeptides. Acts as a regulatory subunit for PP2A-like phosphatases modulating their activity or substrate specificity, probably by inducing a conformational change in the catalytic subunit, a direct target of the PPIase. The chain is Probable serine/threonine-protein phosphatase 2A activator 1 (ppp2r4A) from Dictyostelium discoideum (Social amoeba).